The following is a 122-amino-acid chain: Small ribosomal subunit protein uS13 (122 aa).

A disordered region spans residues 99-122 (RGQRTHTNARTRKGPAKAIAGKKK).

This sequence belongs to the universal ribosomal protein uS13 family. In terms of assembly, part of the 30S ribosomal subunit. Forms a loose heterodimer with protein S19. Forms two bridges to the 50S subunit in the 70S ribosome.

Located at the top of the head of the 30S subunit, it contacts several helices of the 16S rRNA. In the 70S ribosome it contacts the 23S rRNA (bridge B1a) and protein L5 of the 50S subunit (bridge B1b), connecting the 2 subunits; these bridges are implicated in subunit movement. Contacts the tRNAs in the A and P-sites. The polypeptide is Small ribosomal subunit protein uS13 (Rhizobium etli (strain CIAT 652)).